We begin with the raw amino-acid sequence, 408 residues long: Peptidase T (408 aa).

His78 serves as a coordination point for Zn(2+). Residue Asp80 is part of the active site. Residue Asp140 coordinates Zn(2+). The active-site Proton acceptor is Glu174. Zn(2+) is bound by residues Glu175, Asp197, and His379.

The protein belongs to the peptidase M20B family. Zn(2+) serves as cofactor.

The protein localises to the cytoplasm. The catalysed reaction is Release of the N-terminal residue from a tripeptide.. Functionally, cleaves the N-terminal amino acid of tripeptides. This Staphylococcus aureus (strain MRSA252) protein is Peptidase T.